The sequence spans 524 residues: Protein-export membrane protein SecD (524 aa).

Transmembrane regions (helical) follow at residues 10-30, 366-386, 389-409, 420-442, 465-485, and 487-507; these read VIFL…PTMG, KFDS…VVFI, GKPQ…YILL, DLSV…IIIA, FWVI…LAVL, and LGDL…GVLV.

It belongs to the SecD/SecF family. SecD subfamily. As to quaternary structure, part of the protein translocation apparatus. Forms a homodimer and complexes with SecF.

The protein localises to the cell membrane. In terms of biological role, involved in protein export. The polypeptide is Protein-export membrane protein SecD (Haloferax volcanii (strain ATCC 29605 / DSM 3757 / JCM 8879 / NBRC 14742 / NCIMB 2012 / VKM B-1768 / DS2) (Halobacterium volcanii)).